A 256-amino-acid polypeptide reads, in one-letter code: Aspirochlorine biosynthesis protein F (256 aa).

Residue Asn-19 is glycosylated (N-linked (GlcNAc...) asparagine). Transmembrane regions (helical) follow at residues 21–41 (SITP…GPHF), 163–183 (LVWV…FFFT), and 214–234 (FGLG…ILAV).

Its subcellular location is the membrane. Its pathway is mycotoxin biosynthesis. Part of the gene cluster that mediates the biosynthesis of aspirochlorine (or antibiotic A30641), an unusual halogenated spiro compound with distinctive antifungal properties due to selective inhibition of protein biosynthesis, and which is also active against bacteria, viruses, and murine tumor cells. The non-ribosomal peptide synthetase (NRPS) aclP is responsible the formation of the diketopiperazine (DKP) core from the condensation of 2 phenylalanine residues. One Phe residue is tailored into chlorotyrosine by hydroxylation and chlorination, whereas the second Phe undergoes an unprecedented C-C bond cleavage to be converted into glycine. After formation of the DKP, sulfur is incorporated into the DKP by conjugation with glutathione by aclG, followed by its stepwise degradation to the thiol by aclI, aclJ and aclK, and the dithiol oxidation by aclT. In addition, oxygenases (aclB, aclC, aclL and aclO) and O-methyltransferases (aclM and aclU) act as tailoring enzymes to produce the intermediate dechloroaspirochlorine. Ultimately, chlorination of dechloroaspirochlorine by the halogenase aclH is the last step in the aspirochlorine pathway. This Aspergillus oryzae (strain ATCC 42149 / RIB 40) (Yellow koji mold) protein is Aspirochlorine biosynthesis protein F.